A 161-amino-acid chain; its full sequence is Small ribosomal subunit protein uS9 (161 aa).

2 disordered regions span residues 1 to 28 (MAQI…PKAP) and 142 to 161 (KERK…FSKR).

The protein belongs to the universal ribosomal protein uS9 family.

In Clavibacter sepedonicus (Clavibacter michiganensis subsp. sepedonicus), this protein is Small ribosomal subunit protein uS9.